A 168-amino-acid chain; its full sequence is MVVAVYPGTFDPLTRGHEDLVRRASSIFDTLVVGVADSRNKRPFFNLEERLEIANEVLGHYPNVQVMSFKGLLKDFVRVNNARVIVRGLRAVSDFEYEFQMAGMNRYLLPDVETMFMTPSDQYQFISGTIVREIAQLGGDVSKFVFPSVEKRLQDKVAALEQARAANP.

Thr9 is a substrate binding site. Residues 9–10 (TF) and His17 contribute to the ATP site. 3 residues coordinate substrate: Lys41, Leu73, and Arg87. ATP-binding positions include 88 to 90 (GLR), Glu98, and 123 to 129 (YQFISGT).

Belongs to the bacterial CoaD family. In terms of assembly, homohexamer. Mg(2+) serves as cofactor.

It is found in the cytoplasm. The enzyme catalyses (R)-4'-phosphopantetheine + ATP + H(+) = 3'-dephospho-CoA + diphosphate. Its pathway is cofactor biosynthesis; coenzyme A biosynthesis; CoA from (R)-pantothenate: step 4/5. Its function is as follows. Reversibly transfers an adenylyl group from ATP to 4'-phosphopantetheine, yielding dephospho-CoA (dPCoA) and pyrophosphate. The protein is Phosphopantetheine adenylyltransferase of Paraburkholderia phymatum (strain DSM 17167 / CIP 108236 / LMG 21445 / STM815) (Burkholderia phymatum).